The chain runs to 378 residues: Erythronate-4-phosphate dehydrogenase (378 aa).

Substrate is bound by residues S45 and T66. NAD(+)-binding residues include D146 and T175. R208 is an active-site residue. Position 232 (D232) interacts with NAD(+). E237 is a catalytic residue. H254 serves as the catalytic Proton donor. NAD(+) is bound at residue G257. Residue Y258 participates in substrate binding.

Belongs to the D-isomer specific 2-hydroxyacid dehydrogenase family. PdxB subfamily. Homodimer.

Its subcellular location is the cytoplasm. The enzyme catalyses 4-phospho-D-erythronate + NAD(+) = (R)-3-hydroxy-2-oxo-4-phosphooxybutanoate + NADH + H(+). Its pathway is cofactor biosynthesis; pyridoxine 5'-phosphate biosynthesis; pyridoxine 5'-phosphate from D-erythrose 4-phosphate: step 2/5. In terms of biological role, catalyzes the oxidation of erythronate-4-phosphate to 3-hydroxy-2-oxo-4-phosphonooxybutanoate. The sequence is that of Erythronate-4-phosphate dehydrogenase from Pectobacterium atrosepticum (strain SCRI 1043 / ATCC BAA-672) (Erwinia carotovora subsp. atroseptica).